Reading from the N-terminus, the 40-residue chain is Chaperonin HSP60, mitochondrial (40 aa).

It belongs to the chaperonin (HSP60) family.

It localises to the mitochondrion. Functionally, implicated in mitochondrial protein import and macromolecular assembly. May facilitate the correct folding of imported proteins. May also prevent misfolding and promote the refolding and proper assembly of unfolded polypeptides generated under stress conditions in the mitochondrial matrix. The chain is Chaperonin HSP60, mitochondrial from Solanum tuberosum (Potato).